Reading from the N-terminus, the 491-residue chain is Probable cytosol aminopeptidase (491 aa).

Residues Lys264 and Asp269 each coordinate Mn(2+). Lys276 is a catalytic residue. Mn(2+)-binding residues include Asp287, Asp346, and Glu348. Arg350 is a catalytic residue.

The protein belongs to the peptidase M17 family. Mn(2+) is required as a cofactor.

The protein resides in the cytoplasm. It catalyses the reaction Release of an N-terminal amino acid, Xaa-|-Yaa-, in which Xaa is preferably Leu, but may be other amino acids including Pro although not Arg or Lys, and Yaa may be Pro. Amino acid amides and methyl esters are also readily hydrolyzed, but rates on arylamides are exceedingly low.. The enzyme catalyses Release of an N-terminal amino acid, preferentially leucine, but not glutamic or aspartic acids.. In terms of biological role, presumably involved in the processing and regular turnover of intracellular proteins. Catalyzes the removal of unsubstituted N-terminal amino acids from various peptides. The polypeptide is Probable cytosol aminopeptidase (Xylella fastidiosa (strain 9a5c)).